Consider the following 181-residue polypeptide: SecB-like chaperone MT2006 (181 aa).

The protein belongs to the SecB-like family. In terms of assembly, homotetramer, interacts with antitoxin HigA1.

Its function is as follows. Chaperone component of an atypical, type II toxin-antitoxin chaperone (TAC) module, probably required for antitoxin HigA1 to neutralize its cognate toxin HigB1. In Mycobacterium tuberculosis (strain CDC 1551 / Oshkosh), this protein is SecB-like chaperone MT2006 (secBL).